The sequence spans 396 residues: Protein TOC75-4, chloroplastic (396 aa).

At 1-23 (MEAVKEAVRKIKSLVIPHADEKD) the chain is on the chloroplast intermembrane side. A beta stranded membrane pass occupies residues 24–32 (NGIVFEIKL). The Cytoplasmic portion of the chain corresponds to 33–87 (NETDQRVEKWGLDPSLDFFEVTGNCNLGRPNSEGSNQSLMGSVTIRNIFNPKLDD). Residues 88 to 96 (LLSKIEYVR) traverse the membrane as a beta stranded segment. Topologically, residues 97 to 140 (FLEAVKKPRNRTFKTSFFNSRKLSPVFTGGPGYEDLVPPMFVGR) are chloroplast intermembrane. A beta stranded transmembrane segment spans residues 141–148 (DCLKATIT). At 149–156 (ENLTRQRE) the chain is on the cytoplasmic side. Residues 157-164 (LTYGVMFE) traverse the membrane as a beta stranded segment. Residues 165–271 (EIITRDENRR…VEEGSDKPQP (107 aa)) lie on the Chloroplast intermembrane side of the membrane. A beta stranded transmembrane segment spans residues 272 to 280 (PVLVLHGRY). The Cytoplasmic segment spans residues 281–292 (GGCIGDLPSYDV). A beta stranded transmembrane segment spans residues 293–301 (FALGGPNSV). Over 302–363 (RGYSMGELGA…LYRKMGHGSS (62 aa)) the chain is Chloroplast intermembrane. The beta stranded transmembrane segment at 364–370 (YGLGVKL) threads the bilayer. The Cytoplasmic portion of the chain corresponds to 371-384 (GMVRAEYTVRHNRG). The chain crosses the membrane as a beta stranded span at residues 385-392 (TGALFLRF). The Chloroplast intermembrane segment spans residues 393–396 (GERY).

This sequence belongs to the TOC75 family. As to quaternary structure, part of the TOC core complex that includes a protein for the specific recognition of transit peptides surrounded by a ring composed of four proteins forming translocation channels, and four to five GTP-binding proteins providing energy. This core complex can interact with components of the TIC complex to form a larger import complex. Chloroplastic protein precursors also interacts with these complexes. Expressed ubiquitously at low levels.

The protein resides in the plastid. The protein localises to the chloroplast outer membrane. Its function is as follows. Mediates the insertion of proteins targeted to the outer membrane of chloroplasts. Required for the import of protein precursors into chloroplasts. Forms the voltage-dependent preprotein translocation channels (hydrophilic beta barrel) of the TOC complex in the chloroplastic outer membrane. Required for etioplast formation and/or etioplast-chloroplast transition during deetiolation. This is Protein TOC75-4, chloroplastic (TOC75-4) from Arabidopsis thaliana (Mouse-ear cress).